The chain runs to 351 residues: sn-glycerol-3-phosphate import ATP-binding protein UgpC (351 aa).

The ABC transporter domain occupies 4-235; sequence IVLDNVRKSY…PASTFVATFI (232 aa). Residue 37 to 44 participates in ATP binding; sequence GPSGCGKS.

The protein belongs to the ABC transporter superfamily. sn-glycerol-3-phosphate importer (TC 3.A.1.1.3) family. The complex is composed of two ATP-binding proteins (UgpC), two transmembrane proteins (UgpA and UgpE) and a solute-binding protein (UgpB).

It localises to the cell inner membrane. The catalysed reaction is sn-glycerol 3-phosphate(out) + ATP + H2O = sn-glycerol 3-phosphate(in) + ADP + phosphate + H(+). Its function is as follows. Part of the ABC transporter complex UgpBAEC involved in sn-glycerol-3-phosphate (G3P) import. Responsible for energy coupling to the transport system. This Brucella abortus biovar 1 (strain 9-941) protein is sn-glycerol-3-phosphate import ATP-binding protein UgpC.